Consider the following 511-residue polypeptide: Apolipoprotein N-acyltransferase (511 aa).

The next 6 helical transmembrane spans lie at 7 to 29 (PGWP…LAPF), 58 to 78 (GWWY…VSIH), 90 to 110 (LLML…AWLW), 125 to 145 (LAFA…LTGF), 163 to 183 (VPVG…ALLV), and 192 to 212 (GASL…GLYL). The CN hydrolase domain maps to 230-470 (IQGNIAQELK…QGILRGEVIP (241 aa)). Glutamate 269 serves as the catalytic Proton acceptor. Lysine 330 is an active-site residue. Residue cysteine 382 is the Nucleophile of the active site. A helical transmembrane segment spans residues 482–502 (VWPLAGLAGVLLLWALLGRQL).

This sequence belongs to the CN hydrolase family. Apolipoprotein N-acyltransferase subfamily.

The protein resides in the cell inner membrane. It carries out the reaction N-terminal S-1,2-diacyl-sn-glyceryl-L-cysteinyl-[lipoprotein] + a glycerophospholipid = N-acyl-S-1,2-diacyl-sn-glyceryl-L-cysteinyl-[lipoprotein] + a 2-acyl-sn-glycero-3-phospholipid + H(+). It functions in the pathway protein modification; lipoprotein biosynthesis (N-acyl transfer). Functionally, catalyzes the phospholipid dependent N-acylation of the N-terminal cysteine of apolipoprotein, the last step in lipoprotein maturation. The sequence is that of Apolipoprotein N-acyltransferase from Pseudomonas aeruginosa (strain LESB58).